A 164-amino-acid polypeptide reads, in one-letter code: Crossover junction endodeoxyribonuclease RuvC (164 aa).

Residues Asp7, Glu66, and Asp138 contribute to the active site. The Mg(2+) site is built by Asp7, Glu66, and Asp138.

It belongs to the RuvC family. As to quaternary structure, homodimer which binds Holliday junction (HJ) DNA. The HJ becomes 2-fold symmetrical on binding to RuvC with unstacked arms; it has a different conformation from HJ DNA in complex with RuvA. In the full resolvosome a probable DNA-RuvA(4)-RuvB(12)-RuvC(2) complex forms which resolves the HJ. Mg(2+) serves as cofactor.

The protein localises to the cytoplasm. It catalyses the reaction Endonucleolytic cleavage at a junction such as a reciprocal single-stranded crossover between two homologous DNA duplexes (Holliday junction).. In terms of biological role, the RuvA-RuvB-RuvC complex processes Holliday junction (HJ) DNA during genetic recombination and DNA repair. Endonuclease that resolves HJ intermediates. Cleaves cruciform DNA by making single-stranded nicks across the HJ at symmetrical positions within the homologous arms, yielding a 5'-phosphate and a 3'-hydroxyl group; requires a central core of homology in the junction. The consensus cleavage sequence is 5'-(A/T)TT(C/G)-3'. Cleavage occurs on the 3'-side of the TT dinucleotide at the point of strand exchange. HJ branch migration catalyzed by RuvA-RuvB allows RuvC to scan DNA until it finds its consensus sequence, where it cleaves and resolves the cruciform DNA. This is Crossover junction endodeoxyribonuclease RuvC from Paracoccus denitrificans (strain Pd 1222).